The chain runs to 453 residues: Insulinoma-associated protein 1b (453 aa).

Residues 1–20 (MPKGFLVKRNKKAALVSYRI) are SNAG domain. The disordered stretch occupies residues 140–179 (NSNRSGTASGAHAPAIQTGAKRPSADAAERKVSSKSAKKP). Basic and acidic residues predominate over residues 162–171 (PSADAAERKV). The C2H2-type 1 zinc-finger motif lies at 252–274 (YRCPECEKVFSCPANLASHRRWH). Residues 298–318 (AEFPSDRDTPSPGLSESGSED) are disordered. C2H2-type zinc fingers lie at residues 321–343 (YDCQHCGKRFKRQAYLRKHILGH), 383–406 (LTCPACGEKLPNRASLERHLRLLH), and 412–435 (FPCKFCPATFYSSPGLTRHINKCH).

The protein belongs to the INSM1 family.

It localises to the nucleus. In terms of biological role, may act as a transcriptional regulator. May play a role in neurogenesis and neuroendocrine cell differentiation during embryonic development. The protein is Insulinoma-associated protein 1b (insm1b) of Danio rerio (Zebrafish).